Reading from the N-terminus, the 259-residue chain is Phosphate import ATP-binding protein PstB 1 (259 aa).

The region spanning isoleucine 13–isoleucine 254 is the ABC transporter domain. Glycine 45 to serine 52 provides a ligand contact to ATP.

It belongs to the ABC transporter superfamily. Phosphate importer (TC 3.A.1.7) family. As to quaternary structure, the complex is composed of two ATP-binding proteins (PstB), two transmembrane proteins (PstC and PstA) and a solute-binding protein (PstS).

The protein resides in the cell inner membrane. It carries out the reaction phosphate(out) + ATP + H2O = ADP + 2 phosphate(in) + H(+). Part of the ABC transporter complex PstSACB involved in phosphate import. Responsible for energy coupling to the transport system. The chain is Phosphate import ATP-binding protein PstB 1 from Pseudomonas savastanoi pv. phaseolicola (strain 1448A / Race 6) (Pseudomonas syringae pv. phaseolicola (strain 1448A / Race 6)).